Consider the following 690-residue polypeptide: Lipase 2 (690 aa).

Positions 1–37 (MLRGQEERKYSIRKYSIGVVSVLAATMFVVSSHEAQA) are cleaved as a signal peptide. Residues 38 to 295 (SEKTPTNAAV…ADAKKVRPLK (258 aa)) constitute a propeptide that is removed on maturation. Residues 53–71 (NQPGEQGNAITSHQMQSGK) are compositionally biased toward polar residues. The tract at residues 53–266 (NQPGEQGNAI…KPTDKNTDNK (214 aa)) is disordered. A compositionally biased stretch (basic and acidic residues) spans 72–81 (QLDDMHKENG). 3 stretches are compositionally biased toward polar residues: residues 93–114 (LQLS…NDNQ), 124–171 (SKQS…QPSI), and 185–206 (PTST…AQDA). 2 stretches are compositionally biased toward basic and acidic residues: residues 225–237 (IDAK…RQSE) and 257–266 (KPTDKNTDNK). Serine 412 functions as the Nucleophile in the catalytic mechanism. Glycine 579 is a Ca(2+) binding site. The active-site Charge relay system is aspartate 603. Aspartate 644 is a Ca(2+) binding site. Histidine 645 (charge relay system) is an active-site residue. Ca(2+) is bound by residues aspartate 647, aspartate 652, and aspartate 655.

It belongs to the AB hydrolase superfamily. Lipase family.

It localises to the secreted. The catalysed reaction is a triacylglycerol + H2O = a diacylglycerol + a fatty acid + H(+). In Staphylococcus aureus (strain MSSA476), this protein is Lipase 2 (lip2).